A 381-amino-acid chain; its full sequence is MAKRDYYEVLGVSKNATKDEIKKAYRKLSKQYHPDINKAPDAAEKFKEIKEAYEVLSDDEKRARYDRFGHADPNEAFGGGFQGGGFDFGGFSGFGGFEDIFETFFGGGSRRRASGPRKGADLEYMMTLTFEEAAFGKETEIEVPHEETCDTCHGSGAKPGTSPQSCPHCHGSGQVTSEQATPFGRIVNRRTCPVCGGTGRHIPEKCPTCGGTGHVKKRKKIHVKIPAGVDDGQQLRVAGKGEPGVNGGPPGDLYIIFRVQPHEFFKRDGDDIYCEVPLSFAQAALGDEIEVPTLHGDVKLKIPAGTQTGTRFRLKGKGVPNVRGYGQGDQHVIVRVVTPTKLTEKQKQLLREFDRLGGETMHDGSHGRFFEKVKKAFKGET.

Residues 5–69 enclose the J domain; that stretch reads DYYEVLGVSK…EKRARYDRFG (65 aa). Residues 136 to 218 form a CR-type zinc finger; that stretch reads GKETEIEVPH…CGGTGHVKKR (83 aa). Zn(2+) is bound by residues Cys-149, Cys-152, Cys-166, Cys-169, Cys-192, Cys-195, Cys-206, and Cys-209. CXXCXGXG motif repeat units lie at residues 149-156, 166-173, 192-199, and 206-213; these read CDTCHGSG, CPHCHGSG, CPVCGGTG, and CPTCGGTG. A disordered region spans residues 154 to 174; the sequence is GSGAKPGTSPQSCPHCHGSGQ.

The protein belongs to the DnaJ family. In terms of assembly, homodimer. Zn(2+) is required as a cofactor.

Its subcellular location is the cytoplasm. Its function is as follows. Participates actively in the response to hyperosmotic and heat shock by preventing the aggregation of stress-denatured proteins and by disaggregating proteins, also in an autonomous, DnaK-independent fashion. Unfolded proteins bind initially to DnaJ; upon interaction with the DnaJ-bound protein, DnaK hydrolyzes its bound ATP, resulting in the formation of a stable complex. GrpE releases ADP from DnaK; ATP binding to DnaK triggers the release of the substrate protein, thus completing the reaction cycle. Several rounds of ATP-dependent interactions between DnaJ, DnaK and GrpE are required for fully efficient folding. Also involved, together with DnaK and GrpE, in the DNA replication of plasmids through activation of initiation proteins. This chain is Chaperone protein DnaJ, found in Geobacillus thermodenitrificans (strain NG80-2).